The chain runs to 517 residues: Glucans biosynthesis protein G (517 aa).

Residues M1–A28 form the signal peptide.

The protein belongs to the OpgD/OpgG family.

Its subcellular location is the periplasm. Its pathway is glycan metabolism; osmoregulated periplasmic glucan (OPG) biosynthesis. In terms of biological role, involved in the biosynthesis of osmoregulated periplasmic glucans (OPGs). The polypeptide is Glucans biosynthesis protein G (Escherichia coli O1:K1 / APEC).